The primary structure comprises 236 residues: Calcium-binding lectin RapA2 (236 aa).

The protein localises to the secreted. Its function is as follows. Interacts specifically in a calcium-dependent manner with the acidic exopolysaccharide (EPS) and capsular polysaccharide produced by R.leguminosarum. Could be involved in the development of the biofilm matrix made of EPS. The polypeptide is Calcium-binding lectin RapA2 (Rhizobium johnstonii (strain DSM 114642 / LMG 32736 / 3841) (Rhizobium leguminosarum bv. viciae)).